A 342-amino-acid polypeptide reads, in one-letter code: tRNA N6-adenosine threonylcarbamoyltransferase (342 aa).

Residues His-119 and His-123 each contribute to the Fe cation site. Residues 142–146, Asp-175, Gly-188, and Asn-282 contribute to the substrate site; that span reads VVSGG. Residue Asp-310 coordinates Fe cation.

It belongs to the KAE1 / TsaD family. Fe(2+) serves as cofactor.

It localises to the cytoplasm. The enzyme catalyses L-threonylcarbamoyladenylate + adenosine(37) in tRNA = N(6)-L-threonylcarbamoyladenosine(37) in tRNA + AMP + H(+). Its function is as follows. Required for the formation of a threonylcarbamoyl group on adenosine at position 37 (t(6)A37) in tRNAs that read codons beginning with adenine. Is involved in the transfer of the threonylcarbamoyl moiety of threonylcarbamoyl-AMP (TC-AMP) to the N6 group of A37, together with TsaE and TsaB. TsaD likely plays a direct catalytic role in this reaction. The chain is tRNA N6-adenosine threonylcarbamoyltransferase from Moorella thermoacetica (strain ATCC 39073 / JCM 9320).